The primary structure comprises 287 residues: Oxaloacetate decarboxylase (287 aa).

Ser50 contributes to the substrate binding site. Mg(2+) is bound at residue Asp88. Positions 159 and 235 each coordinate substrate.

This sequence belongs to the isocitrate lyase/PEP mutase superfamily. Oxaloacetate decarboxylase family. Homotetramer; dimer of dimers. It depends on Mg(2+) as a cofactor.

It carries out the reaction oxaloacetate + H(+) = pyruvate + CO2. Catalyzes the decarboxylation of oxaloacetate into pyruvate. Seems to play a role in maintaining cellular concentrations of bicarbonate and pyruvate. This chain is Oxaloacetate decarboxylase, found in Pseudomonas paraeruginosa (strain DSM 24068 / PA7) (Pseudomonas aeruginosa (strain PA7)).